A 138-amino-acid polypeptide reads, in one-letter code: Probable prefoldin subunit 4 (138 aa).

It belongs to the prefoldin subunit beta family. As to quaternary structure, heterohexamer of two PFD-alpha type and four PFD-beta type subunits.

In terms of biological role, binds specifically to cytosolic chaperonin (c-CPN) and transfers target proteins to it. Binds to nascent polypeptide chain and promotes folding in an environment in which there are many competing pathways for nonnative proteins. The sequence is that of Probable prefoldin subunit 4 from Drosophila melanogaster (Fruit fly).